Reading from the N-terminus, the 3054-residue chain is Genome polyprotein (3054 aa).

The 142-residue stretch at 163 to 304 (FLPATSLSNV…FAVCHSMTHY (142 aa)) folds into the Peptidase S30 domain. Active-site for P1 proteinase activity residues include histidine 214, aspartate 223, and serine 256. Positions 358-361 (KITC) match the Involved in interaction with stylet and aphid transmission motif. The Involved in virions binding and aphid transmission motif lies at 615–617 (PTK). The Peptidase C6 domain occupies 641–763 (MYIANEGYCY…ESEMKTYNVG (123 aa)). Residues cysteine 649 and histidine 722 each act as for helper component proteinase activity in the active site. A Helicase ATP-binding domain is found at 1234 to 1386 (EISHSPARDF…TQFPVKLKIE (153 aa)). 1247–1254 (GAVGSGKS) provides a ligand contact to ATP. The DECH box signature appears at 1336–1339 (DECH). In terms of domain architecture, Helicase C-terminal spans 1401–1564 (GANADVISCG…NLPVTTQSVS (164 aa)). A Nuclear localization signal motif is present at residues 1889–1896 (NKGKRKGT). Tyrosine 1911 carries the post-translational modification O-(5'-phospho-RNA)-tyrosine. Residues 2038-2255 (GESLFKGPRD…VLWGGHKVFM (218 aa)) enclose the Peptidase C4 domain. Residues histidine 2083, aspartate 2118, and cysteine 2188 each act as for nuclear inclusion protein A activity in the active site. Residues 2521–2641 (WVYCDADGSQ…AIHPDKAERL (121 aa)) form the RdRp catalytic domain. The disordered stretch occupies residues 2798 to 2827 (GADAGKKKDQKDDKVAEQASKDRDVNAGTS). Basic and acidic residues predominate over residues 2801–2822 (AGKKKDQKDDKVAEQASKDRDV). Threonine 3038 bears the Phosphothreonine mark.

Belongs to the potyviridae genome polyprotein family. In terms of assembly, interacts with host eIF4E protein (via cap-binding region); this interaction mediates the translation of the VPg-viral RNA conjugates. Part of a complex that comprises VPg, RNA, host EIF4E and EIF4G; this interaction mediates the translation of the VPg-viral RNA conjugates. Interaction is possible in susceptible hosts but impaired in resistant plants: the VPg of strain HAT interacts with tomato eIF4E1 and eIF4E2 as well as with Capsicum annuum eIF4E1 susceptible alleles pvr2(+), pvr2(3) and pvr2(9) but not with the resistant allele pvr2(2), the VPg of strain CAA10 interacts with C.annuum eIF4E1 susceptible alleles pvr2(+), pvr2(2), pvr2(3) and pvr2(9), the VPg of strain NW interacts at least with C.annuum eIF4E1. Homodimer; disulfide-linked. VPg is uridylylated by the polymerase and is covalently attached to the 5'-end of the genomic RNA. This uridylylated form acts as a nucleotide-peptide primer for the polymerase. In terms of processing, potyviral RNA is expressed as two polyproteins which undergo post-translational proteolytic processing. Genome polyprotein is processed by NIa-pro, P1 and HC-pro proteinases resulting in the production of at least ten individual proteins. P3N-PIPO polyprotein is cleaved by P1 and HC-pro proteinases resulting in the production of three individual proteins. The P1 proteinase and the HC-pro cleave only their respective C-termini autocatalytically. 6K1 is essential for proper proteolytic separation of P3 from CI.

It localises to the host cytoplasmic vesicle. The protein resides in the host nucleus. It is found in the virion. It carries out the reaction RNA(n) + a ribonucleoside 5'-triphosphate = RNA(n+1) + diphosphate. It catalyses the reaction Hydrolyzes glutaminyl bonds, and activity is further restricted by preferences for the amino acids in P6 - P1' that vary with the species of potyvirus, e.g. Glu-Xaa-Xaa-Tyr-Xaa-Gln-|-(Ser or Gly) for the enzyme from tobacco etch virus. The natural substrate is the viral polyprotein, but other proteins and oligopeptides containing the appropriate consensus sequence are also cleaved.. The enzyme catalyses Hydrolyzes a Gly-|-Gly bond at its own C-terminus, commonly in the sequence -Tyr-Xaa-Val-Gly-|-Gly, in the processing of the potyviral polyprotein.. Functionally, required for aphid transmission and also has proteolytic activity. Only cleaves a Gly-Gly dipeptide at its own C-terminus. Interacts with virions and aphid stylets. Acts as a suppressor of RNA-mediated gene silencing, also known as post-transcriptional gene silencing (PTGS), a mechanism of plant viral defense that limits the accumulation of viral RNAs. May have RNA-binding activity. In terms of biological role, has helicase activity. It may be involved in replication. Its function is as follows. Indispensable for virus replication. Reduces the abundance of host transcripts related to jasmonic acid biosynthesis therefore altering the host defenses. In order to increase its own stability, decreases host protein degradation pathways. Indispensable for virus replication. Functionally, mediates the cap-independent, EIF4E-dependent translation of viral genomic RNAs. Binds to the cap-binding site of host EIF4E and thus interferes with the host EIF4E-dependent mRNA export and translation. VPg-RNA directly binds EIF4E and is a template for transcription. Also forms trimeric complexes with EIF4E-EIF4G, which are templates for translation. In terms of biological role, has RNA-binding and proteolytic activities. Its function is as follows. An RNA-dependent RNA polymerase that plays an essential role in the virus replication. Involved in aphid transmission, cell-to-cell and systemis movement, encapsidation of the viral RNA and in the regulation of viral RNA amplification. The sequence is that of Genome polyprotein from Capsicum annuum (Capsicum pepper).